The sequence spans 396 residues: Alpha-1-antitrypsin (396 aa).

Residues 1–2 (HV) form the signal peptide. Residues 1 to 24 (HVEDPQGDAAQKTDTSHHDQEHST) form a disordered region. A compositionally biased stretch (basic and acidic residues) spans 14-24 (DTSHHDQEHST). S16 bears the Phosphoserine mark. 4 N-linked (GlcNAc...) asparagine glycosylation sites follow: N48, N85, N123, and N249. The interval 351–370 (GAMFLEAIPMSIPPEVKFNK) is RCL. S361 is modified (phosphoserine).

The protein belongs to the serpin family. Interacts with CELA2A. Interacts with ERGIC3 and LMAN1/ERGIC53. Interacts with PRSS1/Trypsin. As to expression, plasma.

It is found in the secreted. Inhibitor of serine proteases. Its primary target is elastase, but it also has a moderate affinity for plasmin and thrombin. Inhibits trypsin, chymotrypsin and plasminogen activator. This is Alpha-1-antitrypsin (SERPINA1) from Chlorocebus aethiops (Green monkey).